We begin with the raw amino-acid sequence, 424 residues long: Probable methyltransferase EP424R (424 aa).

Positions 103–315 (QIVTNAWLKM…TYIVGKNRLR (213 aa)) constitute an Adrift-type SAM-dependent 2'-O-MTase domain. S-adenosyl-L-methionine contacts are provided by glycine 135 and aspartate 228. Lysine 268 functions as the Proton acceptor in the catalytic mechanism.

Its subcellular location is the virion. The sequence is that of Probable methyltransferase EP424R from Ornithodoros (relapsing fever ticks).